The primary structure comprises 892 residues: Alpha-actinin-1 (892 aa).

An N-acetylmethionine modification is found at M1. Residues 1–247 (MDHYDSQQTN…IMTYVSSFYH (247 aa)) form an actin-binding region. Position 6 is a phosphoserine (S6). A Phosphotyrosine; by FAK1 modification is found at Y12. 2 Calponin-homology (CH) domains span residues 31 to 135 (KQQR…LRFA) and 144 to 250 (TSAK…HAFS). N6-acetyllysine occurs at positions 95 and 195. 4 Spectrin repeats span residues 274-384 (QLME…WLLN), 394-499 (HLAE…ALER), 509-620 (QLYL…ALTE), and 630-733 (RLRK…EVEN). An interaction with DDN region spans residues 274 to 733 (QLMEDYEKLA…IARTINEVEN (460 aa)). At S471 the chain carries Phosphoserine. Residue K676 is modified to N6-acetyllysine. Phosphoserine is present on S677. 2 consecutive EF-hand domains span residues 746-781 (EQMNEFRASFNHFDRDHSGTLGPEEFKACLISLGYD) and 787-822 (QGEAEFARIMSIVDPNRLGVVTFQAFIDFMSRETAD). Ca(2+) contacts are provided by D759, D761, S763, T765, and E770. A Phosphoserine modification is found at S890.

It belongs to the alpha-actinin family. In terms of assembly, homodimer; antiparallel. Interacts with MYOZ2, TTID and LPP. Interacts with DDN. Interacts with PSD. Interacts with MICALL2. Interacts with DNM2 and CTTN. Interacts with PDLIM1. Interacts with PDLIM2. Interacts with PDLIM4 (via PDZ domain). Interacts with IGSF8.

The protein localises to the cytoplasm. Its subcellular location is the cytoskeleton. It is found in the myofibril. The protein resides in the sarcomere. It localises to the z line. The protein localises to the cell membrane. Its subcellular location is the cell junction. It is found in the cell projection. The protein resides in the ruffle. F-actin cross-linking protein which is thought to anchor actin to a variety of intracellular structures. Association with IGSF8 regulates the immune synapse formation and is required for efficient T-cell activation. This Mus musculus (Mouse) protein is Alpha-actinin-1 (Actn1).